The primary structure comprises 127 residues: Small ribosomal subunit protein uS11c (127 aa).

It belongs to the universal ribosomal protein uS11 family. In terms of assembly, part of the 30S ribosomal subunit.

It is found in the plastid. Its subcellular location is the chloroplast. This Heterosigma akashiwo (strain NIES-293 / 8280G21-1) protein is Small ribosomal subunit protein uS11c.